The primary structure comprises 513 residues: 2-isopropylmalate synthase (513 aa).

The Pyruvate carboxyltransferase domain maps to 4-268 (IKIFDTTLRD…ETGIKTELIY (265 aa)). The Mn(2+) site is built by aspartate 13, histidine 203, histidine 205, and asparagine 239. A regulatory domain region spans residues 392 to 513 (KLVHFHVHTG…GLLRKNGGAE (122 aa)).

This sequence belongs to the alpha-IPM synthase/homocitrate synthase family. LeuA type 1 subfamily. As to quaternary structure, homodimer. The cofactor is Mn(2+).

It localises to the cytoplasm. It carries out the reaction 3-methyl-2-oxobutanoate + acetyl-CoA + H2O = (2S)-2-isopropylmalate + CoA + H(+). It participates in amino-acid biosynthesis; L-leucine biosynthesis; L-leucine from 3-methyl-2-oxobutanoate: step 1/4. In terms of biological role, catalyzes the condensation of the acetyl group of acetyl-CoA with 3-methyl-2-oxobutanoate (2-ketoisovalerate) to form 3-carboxy-3-hydroxy-4-methylpentanoate (2-isopropylmalate). This is 2-isopropylmalate synthase from Thermotoga maritima (strain ATCC 43589 / DSM 3109 / JCM 10099 / NBRC 100826 / MSB8).